A 252-amino-acid polypeptide reads, in one-letter code: Aspartate/glutamate leucyltransferase (252 aa).

Belongs to the R-transferase family. Bpt subfamily.

It localises to the cytoplasm. The catalysed reaction is N-terminal L-glutamyl-[protein] + L-leucyl-tRNA(Leu) = N-terminal L-leucyl-L-glutamyl-[protein] + tRNA(Leu) + H(+). It catalyses the reaction N-terminal L-aspartyl-[protein] + L-leucyl-tRNA(Leu) = N-terminal L-leucyl-L-aspartyl-[protein] + tRNA(Leu) + H(+). Its function is as follows. Functions in the N-end rule pathway of protein degradation where it conjugates Leu from its aminoacyl-tRNA to the N-termini of proteins containing an N-terminal aspartate or glutamate. In Polynucleobacter necessarius subsp. necessarius (strain STIR1), this protein is Aspartate/glutamate leucyltransferase.